The primary structure comprises 129 residues: Ribosome-binding factor A (129 aa).

Belongs to the RbfA family. As to quaternary structure, monomer. Binds 30S ribosomal subunits, but not 50S ribosomal subunits or 70S ribosomes.

The protein resides in the cytoplasm. In terms of biological role, one of several proteins that assist in the late maturation steps of the functional core of the 30S ribosomal subunit. Associates with free 30S ribosomal subunits (but not with 30S subunits that are part of 70S ribosomes or polysomes). Required for efficient processing of 16S rRNA. May interact with the 5'-terminal helix region of 16S rRNA. This is Ribosome-binding factor A from Thioalkalivibrio sulfidiphilus (strain HL-EbGR7).